Here is a 219-residue protein sequence, read N- to C-terminus: Elongation factor Ts (219 aa).

The involved in Mg(2+) ion dislocation from EF-Tu stretch occupies residues 82 to 85; the sequence is TDFV.

Belongs to the EF-Ts family.

Its subcellular location is the cytoplasm. In terms of biological role, associates with the EF-Tu.GDP complex and induces the exchange of GDP to GTP. It remains bound to the aminoacyl-tRNA.EF-Tu.GTP complex up to the GTP hydrolysis stage on the ribosome. This Anaeromyxobacter sp. (strain Fw109-5) protein is Elongation factor Ts.